We begin with the raw amino-acid sequence, 388 residues long: Probable nitrate transporter NarT (388 aa).

The next 12 helical transmembrane spans lie at 14–34 (TLSL…MPMI), 45–65 (ISIV…PFGY), 69–89 (IIGA…PIFL), 98–118 (MLML…VGVT), 139–159 (GNLG…AIGW), 161–181 (STVR…FFLG), 206–226 (YYLS…GIFL), 242–262 (GIRA…GGII), 276–296 (FLFM…ILFT), 297–317 (VGCL…FKLV), 330–350 (GIVS…ITYV), and 359–379 (LAFI…WHLS).

Belongs to the major facilitator superfamily. Nitrate/nitrite porter (TC 2.A.1.8) family.

It is found in the cell membrane. Functionally, probably required for nitrate uptake under anoxic conditions. Also possibly involved in excretion of nitrite produced by the dissimilatory reduction of nitrate. This chain is Probable nitrate transporter NarT (narT), found in Staphylococcus carnosus (strain TM300).